Reading from the N-terminus, the 802-residue chain is Cell division cycle 5-like protein (802 aa).

2 HTH myb-type domains span residues 1 to 56 (MPRI…WLDP) and 57 to 108 (SIKK…DKAA). 2 consecutive DNA-binding regions (H-T-H motif) follow at residues 31–54 (WSRI…YEWL) and 82–104 (WRTI…EFLL). Positions 108-143 (AQRDNEEETTDDPRKLKPGEIDPNPETKPARPDPID) are disordered. Basic and acidic residues predominate over residues 118-127 (DDPRKLKPGE). Lys135 participates in a covalent cross-link: Glycyl lysine isopeptide (Lys-Gly) (interchain with G-Cter in SUMO2). The stretch at 142-245 (IDMDEDELEM…DADFRKLRQQ (104 aa)) forms a coiled coil. Residues 165–271 (KKAKRKAREK…KDKQHLKRKK (107 aa)) carry the Nuclear localization signal motif. Positions 200–206 (KKRKKKR) are required for interaction with CTNNBL1. Lys219 is covalently cross-linked (Glycyl lysine isopeptide (Lys-Gly) (interchain with G-Cter in SUMO2)). Phosphothreonine is present on Thr227. Residues 246-262 (DLDGELRSEKEGRDRKK) show a composition bias toward basic and acidic residues. Residues 246-278 (DLDGELRSEKEGRDRKKDKQHLKRKKESDLPSA) are disordered. An interaction with PPP1R8 region spans residues 260–606 (RKKDKQHLKR…NKKGKTVGFG (347 aa)). Residues Ser303 and Ser358 each carry the phosphoserine modification. Thr377, Thr385, Thr396, Thr404, Thr411, and Thr415 each carry phosphothreonine. Residues 409-418 (LSTPFRTPSH) show a composition bias toward polar residues. Residues 409–459 (LSTPFRTPSHGSEGLTPRSGTTPKPVINSTPGRTPLRDKLNINPEDGMADY) are disordered. Ser417 is modified (phosphoserine). Residues Thr424 and Thr430 each carry the phosphothreonine modification. A compositionally biased stretch (polar residues) spans 426–440 (RSGTTPKPVINSTPG). Phosphoserine is present on Ser437. Phosphothreonine is present on residues Thr438 and Thr442. Residue Lys487 forms a Glycyl lysine isopeptide (Lys-Gly) (interchain with G-Cter in SUMO2) linkage. Positions 501–659 (ELEEREIDDT…GELSSEAYNQ (159 aa)) are interaction with DAPK3. Coiled coils occupy residues 676-701 (RYTR…INRG) and 764-802 (PRRL…KAKF). Residues 706-800 (EAKRAAKMEK…LLLEKETLKA (95 aa)) are interaction with PLRG1.

This sequence belongs to the CEF1 family. Homodimer. Interacts with DAPK3. Component of the precatalytic, catalytic and postcatalytic spliceosome complexes. Part of a spliceosomal 'core' complex consisting of CDC5L, PLRG1, SPF27, CCAP1, CCAP3 and CCAP6. Interacts with PLRG1, Lodestar/TTF2, and NIPP1/PPP1R8. Component of the minor spliceosome, which splices U12-type introns. Within this complex, interacts with SCNM1. Component of the PRP19-CDC5L splicing complex composed of a core complex comprising a homotetramer of PRPF19, CDC5L, PLRG1 and BCAS2, and at least three less stably associated proteins CTNNBL1, CWC15 and HSPA8. Interacts (via its C-terminus) directly in the complex with PRPF19 and BCAS2. Interacts (via its C-terminus) directly with PRGL1 (via its WD40 repeat domain); the interaction is required for mRNA splicing but not for spliceosome assembly. Also interacts with CTNNBL1. Interacts with PRPF19 (via N-terminus). Interacts with USB1. Interacts with DDX41. Phosphorylated on serine and threonine residues. Phosphorylation on Thr-411 and Thr-438 is required for CDC5L-mediated mRNA splicing. Has no effect on subcellular location nor on homodimerization. Phosphorylated in vitro by CDK2. Phosphorylation enhances interaction with PPP1R8.

Its subcellular location is the nucleus. The protein resides in the nucleus speckle. It localises to the cytoplasm. DNA-binding protein involved in cell cycle control. May act as a transcription activator. Plays a role in pre-mRNA splicing as core component of precatalytic, catalytic and postcatalytic spliceosomal complexes. Component of the PRP19-CDC5L complex that forms an integral part of the spliceosome and is required for activating pre-mRNA splicing. The PRP19-CDC5L complex may also play a role in the response to DNA damage (DDR). As a component of the minor spliceosome, involved in the splicing of U12-type introns in pre-mRNAs. The chain is Cell division cycle 5-like protein (CDC5L) from Bos taurus (Bovine).